The primary structure comprises 478 residues: Spindle defective protein 3 (478 aa).

At 1 to 24 the chain is on the cytoplasmic side; it reads MDQMTVEEKILEHQELEDGSSSFR. Residues 25–45 form a helical membrane-spanning segment; that stretch reads WLVSSTVIAIGGATVALYISG. Residues 46–52 are Extracellular-facing; that stretch reads KIDWKIP. The chain crosses the membrane as a helical span at residues 53–73; the sequence is AIEAGLALTAGGTITCGYLWF. The Cytoplasmic segment spans residues 74-478; that stretch reads KKRVKTVRKL…LRRVDDDIIE (405 aa).

It is found in the mitochondrion. Its subcellular location is the mitochondrion outer membrane. In terms of biological role, in the first mitotic division in embryos, required for mitotic spindle alignment and asymmetric cell division. Required for motor-driven chromosome movement and homolog searching within the nucleus, and subsequently ensures homologous chromosome pairing during the prophase stage of meiosis. The protein is Spindle defective protein 3 of Caenorhabditis elegans.